A 160-amino-acid chain; its full sequence is UPF0178 protein BPP1051 (160 aa).

This sequence belongs to the UPF0178 family.

The sequence is that of UPF0178 protein BPP1051 from Bordetella parapertussis (strain 12822 / ATCC BAA-587 / NCTC 13253).